The sequence spans 160 residues: MGTLDTKGFTEEQEALVVKSWNAMKKNSAELGLKLFLKIFEIAPSAQKLFSFLKDSKVPLEKNTKLKPHAMSVFLMTCESAVQLRKSGKVTVRESSLKKLGANHFKYGVVDEHFEVTKFALLETIKEAVPEMWSPAMKNAWGEAYDQLVNAIKSEMKPSS.

In terms of domain architecture, Globin spans 8 to 157 (GFTEEQEALV…LVNAIKSEMK (150 aa)). The Homodimerization signature appears at 41–45 (EIAPS). Heme b is bound by residues serine 51, lysine 65, histidine 69, lysine 99, and histidine 104. The Homodimerization motif lies at 111–123 (DEHFEVTKFALLE).

It belongs to the plant globin family. Homodimer. The cofactor is heme b.

It carries out the reaction Fe(III)-heme b-[protein] + nitric oxide + H2O = Fe(II)-heme b-[protein] + nitrite + 2 H(+). In terms of biological role, phytoglobin that reduces nitrite to nitric oxide (NO) under anoxic conditions (e.g. during flooding or in waterlogged soil) and upon root nodulation. Required for general plant development and during nodulation, especially for the onset of symbiosis. Monitors nitric oxide (NO) levels during early phase of the nitrogen-fixing symbiosis and buffers oxygen in functioning nodules. May not function as an oxygen storage or transport protein. Has an unusually high affinity for O(2) through a hexacoordinate heme iron because of a very low dissociation constant. This is Anaerobic nitrite reductase Glb1-1 from Medicago truncatula (Barrel medic).